Here is a 245-residue protein sequence, read N- to C-terminus: tRNA pseudouridine synthase A (245 aa).

Catalysis depends on Asp52, which acts as the Nucleophile. Substrate is bound at residue Tyr111.

It belongs to the tRNA pseudouridine synthase TruA family. As to quaternary structure, homodimer.

It carries out the reaction uridine(38/39/40) in tRNA = pseudouridine(38/39/40) in tRNA. Functionally, formation of pseudouridine at positions 38, 39 and 40 in the anticodon stem and loop of transfer RNAs. The sequence is that of tRNA pseudouridine synthase A from Thermotoga petrophila (strain ATCC BAA-488 / DSM 13995 / JCM 10881 / RKU-1).